Here is a 988-residue protein sequence, read N- to C-terminus: MKLVNLKQAILQAWKERWSDYQWAINMKKFFPKGVTWDILNLAEALLDQAMIGPAPNPLILSYLKYAINSQMVSYSTVLTAISKFDDFSRDLCIQSLLEIMDMFCDNLSCHGKAEECIGLCRALMSALNWLLRCATFYTDKLKDVLDPVAGENHLSMCLQRLKSILGSTKNRALIHIAKLEEPTSWTSVEQSQLRLSESISLLPSVQLRNQAEECVSLIRSIPSMLSVHSDQLQTNGFPTVHAVVMLEGTMNLTGDAQPLVEQMNTVKRMQRIPLHLFLLEVWKACIVGLIESPEGTEELKWTAFTFLKIPQALAKLKKLSSMEQDFNEDMKCAFEYLLKLTPLLDKADQRCNCDCVSLLLQECNKLGLLSEQNMENLMAKRTADREQAPRLKSSENSTIQPNPGLILRAEPTVTNILKTMDADHSKSPEGLLGVLGHMLSGKSLDLLLAAAAATGKLKSFARKFIQLNEFTRHIGVESSKAANVRALLFDISFLMLCHVAQTYGSEMILSEGCPGGEMPFFESWMQTCMPGEGRVLNPDHPCFRHPDIAKVEALVALLNTSTEMKLAQTKWHEVCLSIPAAILEIHNAWENGVLSSEAIQKITDNIKGKVCSLAVCAVAWLVAHVRMLGLDERDKSLQMIRQLGSPMFGDNTLQFYSERVIIMSSILDNMCSEVLQQTTTQIKFSAAGSEPMPYIHRLPPKTPIKEVLRGAFSSTLEKGWVDSRTLHNFDTLLHMGGVYWFCNNLVKELLRETRLEFALRAVELLYAIFCLDMQQLTLTLLGHVLPSLLTDSAKWHMLMDPPGRALAKLSVWCAMTSYSTQNKGQPSPRQRKRHREDIEDYSSLFPLDDTQQSKLMRLLSSNEEEHNVQANPVDRPMNSSLSASQIHNISSKEPLNRVLANLFLLISSVLGAKTAGAQTQFVQWFMEECVESLELGGKGCILQFMPFSMVSELVKVSTLSSPKIVLAITDLTLPLGRRVAAKALTAL.

6 consecutive short sequence motifs (LXXLL motif) follow at residues 128–132, 341–345, 445–449, 555–559, 786–790, and 856–860; these read LNWLL, LTPLL, LDLLL, LVALL, LPSLL, and LMRLL.

The protein belongs to the Mediator complex subunit 24 family. Component of the Mediator complex.

It localises to the nucleus. In terms of biological role, component of the Mediator complex, a coactivator involved in the regulated transcription of nearly all RNA polymerase II-dependent genes. Mediator functions as a bridge to convey information from gene-specific regulatory proteins to the basal RNA polymerase II transcription machinery. Mediator is recruited to promoters by direct interactions with regulatory proteins and serves as a scaffold for the assembly of a functional preinitiation complex with RNA polymerase II and the general transcription factors. The chain is Mediator of RNA polymerase II transcription subunit 24 (med24) from Xenopus laevis (African clawed frog).